We begin with the raw amino-acid sequence, 593 residues long: NADH-quinone oxidoreductase subunit C/D (593 aa).

Positions 1-184 (MTTGSALYIP…DPFSLNLAKQ (184 aa)) are NADH dehydrogenase I subunit C. Positions 208–593 (DYMFLNLGPN…IDFVMADVDR (386 aa)) are NADH dehydrogenase I subunit D.

It in the N-terminal section; belongs to the complex I 30 kDa subunit family. This sequence in the C-terminal section; belongs to the complex I 49 kDa subunit family. NDH-1 is composed of 13 different subunits. Subunits NuoB, CD, E, F, and G constitute the peripheral sector of the complex.

It is found in the cell inner membrane. The catalysed reaction is a quinone + NADH + 5 H(+)(in) = a quinol + NAD(+) + 4 H(+)(out). Its function is as follows. NDH-1 shuttles electrons from NADH, via FMN and iron-sulfur (Fe-S) centers, to quinones in the respiratory chain. The immediate electron acceptor for the enzyme in this species is believed to be ubiquinone. Couples the redox reaction to proton translocation (for every two electrons transferred, four hydrogen ions are translocated across the cytoplasmic membrane), and thus conserves the redox energy in a proton gradient. In Pseudomonas fluorescens (strain ATCC BAA-477 / NRRL B-23932 / Pf-5), this protein is NADH-quinone oxidoreductase subunit C/D.